The sequence spans 335 residues: Ornithine carbamoyltransferase (335 aa).

Carbamoyl phosphate-binding positions include 56–59 (STRT), Gln83, Arg107, and 134–137 (HPTQ). L-ornithine-binding positions include Asn168, Asp232, and 236 to 237 (SM). Carbamoyl phosphate-binding positions include 274-275 (CL) and Arg320.

The protein belongs to the aspartate/ornithine carbamoyltransferase superfamily. OTCase family.

Its subcellular location is the cytoplasm. The enzyme catalyses carbamoyl phosphate + L-ornithine = L-citrulline + phosphate + H(+). It functions in the pathway amino-acid biosynthesis; L-arginine biosynthesis; L-arginine from L-ornithine and carbamoyl phosphate: step 1/3. In terms of biological role, reversibly catalyzes the transfer of the carbamoyl group from carbamoyl phosphate (CP) to the N(epsilon) atom of ornithine (ORN) to produce L-citrulline. This Yersinia pseudotuberculosis serotype I (strain IP32953) protein is Ornithine carbamoyltransferase.